The chain runs to 415 residues: Casein kinase I isoform delta (415 aa).

The Protein kinase domain occupies 9-277 (YRLGRKIGSG…YLRQLFRNLF (269 aa)). ATP is bound by residues 15 to 23 (IGSGSFGDI) and Lys38. The active-site Proton acceptor is Asp128. The interval 278-364 (HRQGFSYDYV…TSPRPVSGME (87 aa)) is centrosomal localization signal (CLS). Residues 301 to 315 (ADDAERERRDREERL) are compositionally biased toward basic and acidic residues. Residues 301-415 (ADDAERERRD…SSGLQSVVHR (115 aa)) form a disordered region. The autoinhibitory stretch occupies residues 317–342 (HSRNPATRGLPSTASGRLRGTQEVAP). 2 positions are modified to phosphoserine: Ser328 and Ser331. Over residues 347–358 (TPTSHTANTSPR) the composition is skewed to polar residues. Position 370 is a phosphoserine (Ser370). Arg375 is subject to Omega-N-methylarginine. Positions 380–400 (NVSSSDLTGRQDTSRMSTSQI) are enriched in polar residues. Phosphoserine is present on residues Ser382, Ser383, Ser384, Pro401, Ser407, and Ser411.

Belongs to the protein kinase superfamily. CK1 Ser/Thr protein kinase family. Casein kinase I subfamily. As to quaternary structure, monomer. Component of the circadian core oscillator, which includes the CRY proteins, CLOCK, or NPAS2, BMAL1 or BMAL2, CSNK1D and/or CSNK1E, TIMELESS and the PER proteins. Interacts directly with PER1 and PER2 which may lead to their degradation. Interacts with MAP1A. Interacts with MAPT/TAU, DBNDD2, AIB1/NCOA3 and ESR1. Interacts with AKAP9/AKAP450; this interaction promotes centrosomal subcellular location. Binds to tubulins in mitotic cells upon DNA damage. Interacts with GJA1. Interacts with SNAPIN. Interacts with DNMT1. Interacts with DDX3X; this interaction enhances CSNK1D kinase activity in vitro, but it is unclear whether this interaction is physiologically relevant. Interacts with FAM83A, FAM83B, FAM83E and FAM83H (via DUF1669). Post-translationally, autophosphorylated on serine and threonine residues; this autophosphorylation represses activity. Reactivated by phosphatase-mediated dephosphorylation. May be dephosphorylated by PP1. In terms of tissue distribution, expressed ubiquitously. However, kinase activity is not uniform, with highest kinase activity in splenocytes.

It localises to the cytoplasm. The protein resides in the nucleus. Its subcellular location is the cytoskeleton. The protein localises to the microtubule organizing center. It is found in the centrosome. It localises to the perinuclear region. The protein resides in the cell membrane. Its subcellular location is the spindle. The protein localises to the golgi apparatus. The enzyme catalyses L-seryl-[protein] + ATP = O-phospho-L-seryl-[protein] + ADP + H(+). It catalyses the reaction L-threonyl-[protein] + ATP = O-phospho-L-threonyl-[protein] + ADP + H(+). It carries out the reaction L-seryl-[tau protein] + ATP = O-phospho-L-seryl-[tau protein] + ADP + H(+). The catalysed reaction is L-threonyl-[tau protein] + ATP = O-phospho-L-threonyl-[tau protein] + ADP + H(+). Exhibits substrate-dependent heparin activation. Drug-mediated inhibition leads to a delay of the oscillations with the magnitude of this effect dependent upon the timing of drug administration. Inhibited by phosphorylation. Essential serine/threonine-protein kinase that regulates diverse cellular growth and survival processes including Wnt signaling, DNA repair and circadian rhythms. It can phosphorylate a large number of proteins. Casein kinases are operationally defined by their preferential utilization of acidic proteins such as caseins as substrates. Phosphorylates connexin-43/GJA1, MAP1A, SNAPIN, MAPT/TAU, TOP2A, DCK, HIF1A, EIF6, p53/TP53, DVL2, DVL3, ESR1, AIB1/NCOA3, DNMT1, PKD2, YAP1, PER1 and PER2. Central component of the circadian clock. In balance with PP1, determines the circadian period length through the regulation of the speed and rhythmicity of PER1 and PER2 phosphorylation. Controls PER1 and PER2 nuclear transport and degradation. YAP1 phosphorylation promotes its SCF(beta-TRCP) E3 ubiquitin ligase-mediated ubiquitination and subsequent degradation. DNMT1 phosphorylation reduces its DNA-binding activity. Phosphorylation of ESR1 and AIB1/NCOA3 stimulates their activity and coactivation. Phosphorylation of DVL2 and DVL3 regulates WNT3A signaling pathway that controls neurite outgrowth. Phosphorylates NEDD9/HEF1. EIF6 phosphorylation promotes its nuclear export. Triggers down-regulation of dopamine receptors in the forebrain. Activates DCK in vitro by phosphorylation. TOP2A phosphorylation favors DNA cleavable complex formation. May regulate the formation of the mitotic spindle apparatus in extravillous trophoblast. Modulates connexin-43/GJA1 gap junction assembly by phosphorylation. Probably involved in lymphocyte physiology. Regulates fast synaptic transmission mediated by glutamate. This is Casein kinase I isoform delta (Csnk1d) from Mus musculus (Mouse).